The primary structure comprises 198 residues: Recombination protein RecR (198 aa).

The segment at 58–73 adopts a C4-type zinc-finger fold; it reads CSVCGNFTDKDPCAIC. One can recognise a Toprim domain in the interval 81 to 175; sequence SIICVIEQPK…KVTRIAHGVP (95 aa).

This sequence belongs to the RecR family.

May play a role in DNA repair. It seems to be involved in an RecBC-independent recombinational process of DNA repair. It may act with RecF and RecO. This Clostridium botulinum (strain ATCC 19397 / Type A) protein is Recombination protein RecR.